The chain runs to 512 residues: Matrix metalloproteinase-27 (512 aa).

Residues 1-17 (MKSFLLLFLLFVTFSSA) form the signal peptide. A propeptide spans 18-98 (LPADQKMENE…PRCGVPDVGQ (81 aa)) (activation peptide). Residues 89–96 (PRCGVPDV) carry the Cysteine switch motif. Zn(2+) is bound at residue cysteine 91. N-linked (GlcNAc...) asparagine glycosylation is present at asparagine 110. Positions 121 and 155 each coordinate Ca(2+). Histidine 165 contributes to the Zn(2+) binding site. Positions 173, 174, and 178 each coordinate Ca(2+). Histidine 181 is a binding site for Zn(2+). Glycine 188 and aspartate 192 together coordinate Ca(2+). Histidine 194 contributes to the Zn(2+) binding site. Residues aspartate 196 and glutamate 199 each coordinate Ca(2+). Histidine 216 is a binding site for Zn(2+). Glutamate 217 is an active-site residue. Histidine 220 and histidine 226 together coordinate Zn(2+). Hemopexin repeat units follow at residues 276-325 (PHAC…WPSL), 326-371 (PADL…GFPR), 373-421 (VKKI…FPGI), and 422-465 (GLRV…WFQC). Cysteine 279 and cysteine 465 are oxidised to a cystine. Aspartate 286 lines the Ca(2+) pocket. Residues aspartate 377 and aspartate 426 each coordinate Ca(2+). The required for retention in the endoplasmic reticulum stretch occupies residues 466–512 (KEPLNSSLDFHFNQEKAYSGEVETLHHQSLSLLIFGIVHLLNKICSY).

Belongs to the peptidase M10A family. It depends on Ca(2+) as a cofactor. Zn(2+) serves as cofactor. Post-translationally, N-glycosylated.

The protein resides in the endoplasmic reticulum. In terms of biological role, matrix metalloproteinases degrade protein components of the extracellular matrix such as fibronectin, laminin, gelatins and/or collagens. This Tupaia belangeri (Common tree shrew) protein is Matrix metalloproteinase-27 (MMP27).